Consider the following 1893-residue polypeptide: MAGLQLMTPASSPMGPFFGLPWQQEAIHDNIYTPRKYQVELLEAALDHNTIVCLNSGSGKTFIAVLLSKELSYQIRGDFSKNTKRTVFLVNSEKQVSQQVSAVRTHTDLKVGEYSDQEKTQCWAKERWYLEFETHQVLVMTCHIFLNVLKSGNVSLSNINLLVFDECHLAIQDHPYREIMKICESCQPCPRILGLTASILNGKCDPRDLEEKIQKLEEILRSNAETATDLVVLDRYASQPCEIVLDCGPYIDKSGLYQRLLNELDEALNFLIDCNISTHSKERDSTLISKQILSDCQTVLLVLGPWCADKVAGMMVRELQKYIKHEQEELHRKFLLFTDTILRKIHALCEEHFSPASLDMKFVTPKVIKLLEILRKYKPYERQQFESVEWYNNRNQDNYVSWSDSEDDDDEDEEIEEKEKTETSFPSPFTNILCGIIFVERRYTAVVLNRLIKEAGKQDPELAYISSNFITGHGIGKNQPRNKQMEVEFRKQEEVLRKFRAHETNLLIATSIVEEGVDIPKCNLVVRFDLPSEYRSYVQSKGRARAPISNYIMLADSDKIKAFEEDLKTYKAIEKILRNKCSKSIDCGNTESEPIVDDDEIFPPYVLRQDDGSPRVTINTAIGHINRYCARLPSDPFTHLAPKCKTREFPDGLYRSTLYLPINSPLRAPIVGPPMNCGRLADRAVALICCKKLHEIGELDDHLMPVGKETVKYEEELDLHDEEETSVPGRPGSTKRRQCYPKAIPECLRNSYPKPGQPCYLYVIGMVLTTPLPDELNFRRRKLYPPEDTTRCFGILTAKPIPQIPHFPVYTRSGEVTISIELKKSGFTLNLEQLELITRLHQYIFSHILRLEKPALEFKPTVADCAYCVLPLNVVNDSGTLDIDFKFVEDIEKSEARTGIPNTQYSAESPFIFKLEDYQDAVIIPRQVIYRNFDQPHRFYVADVYTDLTPLSKFPSPEYETFAEYYKTKYNLDLTNLNQPLLDVDHTSSRLNLLTPRHLNQKGKALPLSSAEKRKAKWESLQNKQILVPELCAIHPVPASLWRKAVCLPSILYRLHCLLTAEELRAQTAIDAGVGVKSLPDDFRYPNLDFGWKRSIDSKTFISNQSSSSVESESDCRLNKTTAPDSAASSAANSVIYMQINDQMSVNCTPPCQKSLSHLQTVCFSDDYKAINGISCNGLTNGDWEAESAACFQKDERITCKQEIPEKSTSFHVQNLPKENQPILKECTLSNSDGNVSKPTSDECPSTCTSDMHYDSGLSNRHSSKTLGPNPGLILQALTLSNASDGFNLERLEMLGDSFLKHAITTYLFCTYPDAHEGRLSYMRSKKVSNCNLYRLGKKKGSPSRMVVSIFDPPVNWLPPGYIVNQDKNSDKWESNETSGEDVMVNGKIDEDFDDEEDEDLMWRNPKEETDFDDDFLEYDQEHIKFIDSMLMGSGAFVKKIPLSSFAPPDQNYEWRAPKKPPLESSQFPCDFDDFDYSSWDAMCYLDPSKAVEEDDFVVGFWNPSEENCGADAGKQSISYDLHTEQCIADKSIADCVEALLGCYLTSCGERAAQLFLCSLGLKVLPEVRKLVTNTNVISASSSYQNSTRDNCTLTARTNTDLSSCKGIDYGYLKIPPRCMFEHPDAEKTLDHLISGFENFEKKINYPFKNKAYLLQAFTHASYHYNTITDCYQRLEFLGDAILDYLITKHLYEDPRQHSPGVLTDLRSALVNNTIFASLAVKYDYHKYFKAISPELFHVIDDFVQFQLEKNEMQGMDSELRRSEEDEEKEEDIEVPKAMGDIFESLAGAIYMDSGMSLETVWHVYYPMMQPLIEKFSANVPRSPVRELLEMEPETAKFSPAERTYDGKVRVTVEVVGKGKFKGVGRSYRIAKSAAARRALRSLKANQSQVPNS.

The 177-residue stretch at Leu41–Glu217 folds into the Helicase ATP-binding domain. Leu54 to Thr61 serves as a coordination point for ATP. Positions Asp165–His168 match the DECH box motif. The disordered stretch occupies residues Val400–Ser424. Residues Asp404–Glu416 show a composition bias toward acidic residues. Residues Ser424–Glu593 enclose the Helicase C-terminal domain. Residues Ala621 to Tyr713 form the Dicer dsRNA-binding fold domain. The tract at residues Asp718–Arg737 is disordered. Positions Lys886–Pro1036 constitute a PAZ domain. RNase III domains are found at residues Thr1249 to Gly1380 and Phe1637 to Gly1795. Residues Glu1293, Asp1371, Glu1374, Glu1676, Asp1781, and Glu1784 each contribute to the Mg(2+) site. Residues Val1820–Ala1885 enclose the DRBM domain.

This sequence belongs to the helicase family. Dicer subfamily. Component of the RISC loading complex (RLC), or micro-RNA (miRNA) loading complex (miRLC), which is composed of dicer1, ago2 and tarbp2; dicer1 and tarbp2 are required to process precursor miRNAs (pre-miRNAs) to mature miRNAs and then load them onto ago2. Note that the trimeric RLC/miRLC is also referred to as RISC. Mg(2+) serves as cofactor. The cofactor is Mn(2+).

Its subcellular location is the cytoplasm. The catalysed reaction is Endonucleolytic cleavage to 5'-phosphomonoester.. In terms of biological role, double-stranded RNA (dsRNA) endoribonuclease playing a central role in short dsRNA-mediated post-transcriptional gene silencing. Cleaves naturally occurring long dsRNAs and short hairpin pre-microRNAs (miRNA) into fragments of twenty-one to twenty-three nucleotides with 3' overhang of two nucleotides, producing respectively short interfering RNAs (siRNA) and mature microRNAs. SiRNAs and miRNAs serve as guide to direct the RNA-induced silencing complex (RISC) to complementary RNAs to degrade them or prevent their translation. Gene silencing mediated by siRNAs, also called RNA interference, controls the elimination of transcripts from mobile and repetitive DNA elements of the genome but also the degradation of exogenous RNA of viral origin for instance. The miRNA pathway on the other side is a mean to specifically regulate the expression of target genes. The chain is Endoribonuclease Dicer (dicer1) from Xenopus tropicalis (Western clawed frog).